The following is a 247-amino-acid chain: Particulate methane monooxygenase beta subunit (247 aa).

Helical transmembrane passes span 23–43 (WMAL…HAML), 59–79 (LWVT…QSYL), 86–106 (PWGA…NRYF), 111–131 (WTYF…AIIL), 145–165 (AIVG…PIIA), and 215–235 (VSAF…HFIG).

As to quaternary structure, m.capsulatus has two forms of methane monooxygenase, a soluble (sMMO) and a membrane-bound (particulate) type (pMMO). The particulate type is a nonamer composed of three alpha:beta:gamma heterotrimeric protomers assembled into a cylindrical structure; the beta and gamma subunits comprise the bulk of the membrane-spanning regions and the soluble regions are derived primarily from alpha subunits which form two antiparallel beta-barrel-like structures each. This assembly, also called pMMO hydroxylase (pMMO-H), is proposed to associate with methanol dehydrogenase (MDH), also designated as pMMO-R, to form the pMMO-C complex which seems to have greater methane monooxygenase activity.

It is found in the membrane. The enzyme catalyses methane + a quinol + O2 = methanol + a quinone + H2O. Its function is as follows. Non-catalytic subunit of the methane monooxygenase that is responsible for the initial oxygenation of methane to methanol in methanotrophs. At least in vitro, specific quinols can replace NADH as reductants. The chain is Particulate methane monooxygenase beta subunit (pmoA1) from Methylococcus capsulatus (strain ATCC 33009 / NCIMB 11132 / Bath).